Reading from the N-terminus, the 581-residue chain is ATP-dependent lipid A-core flippase (581 aa).

Helical transmembrane passes span 27–47, 63–83, 154–174, 251–271, and 279–299; these read VFLAVIGMVGTAATEPVFPAI, MVWLIPMGIVTLFLVRSVIVY, IALIGYLLYLDWKLTLITLAI, MTPITHIAASVAVAIIAFLAL, and GASAGSFISFITAMLMLISPV. Residues 28–311 enclose the ABC transmembrane type-1 domain; the sequence is FLAVIGMVGT…LATVNPTIQR (284 aa). The ABC transporter domain maps to 343–579; the sequence is ICFDNVSLRY…GSYYANLSRL (237 aa). Residue 377–384 coordinates ATP; sequence GASGGGKS.

Belongs to the ABC transporter superfamily. Lipid exporter (TC 3.A.1.106) family. As to quaternary structure, homodimer.

It localises to the cell inner membrane. The enzyme catalyses ATP + H2O + lipid A-core oligosaccharideSide 1 = ADP + phosphate + lipid A-core oligosaccharideSide 2.. In terms of biological role, involved in lipopolysaccharide (LPS) biosynthesis. Translocates lipid A-core from the inner to the outer leaflet of the inner membrane. Transmembrane domains (TMD) form a pore in the inner membrane and the ATP-binding domain (NBD) is responsible for energy generation. This Albidiferax ferrireducens (strain ATCC BAA-621 / DSM 15236 / T118) (Rhodoferax ferrireducens) protein is ATP-dependent lipid A-core flippase.